The sequence spans 458 residues: A-type ATP synthase subunit B (458 aa).

This sequence belongs to the ATPase alpha/beta chains family. As to quaternary structure, has multiple subunits with at least A(3), B(3), C, D, E, F, H, I and proteolipid K(x).

The protein localises to the cell membrane. Functionally, component of the A-type ATP synthase that produces ATP from ADP in the presence of a proton gradient across the membrane. The B chain is a regulatory subunit. The protein is A-type ATP synthase subunit B of Methanocorpusculum labreanum (strain ATCC 43576 / DSM 4855 / Z).